Consider the following 244-residue polypeptide: Biosynthetic peptidoglycan transglycosylase (244 aa).

The chain crosses the membrane as a helical span at residues 26-46; it reads FLSYFIGLTVALTFLFRFVPI.

Belongs to the glycosyltransferase 51 family.

The protein resides in the cell inner membrane. It carries out the reaction [GlcNAc-(1-&gt;4)-Mur2Ac(oyl-L-Ala-gamma-D-Glu-L-Lys-D-Ala-D-Ala)](n)-di-trans,octa-cis-undecaprenyl diphosphate + beta-D-GlcNAc-(1-&gt;4)-Mur2Ac(oyl-L-Ala-gamma-D-Glu-L-Lys-D-Ala-D-Ala)-di-trans,octa-cis-undecaprenyl diphosphate = [GlcNAc-(1-&gt;4)-Mur2Ac(oyl-L-Ala-gamma-D-Glu-L-Lys-D-Ala-D-Ala)](n+1)-di-trans,octa-cis-undecaprenyl diphosphate + di-trans,octa-cis-undecaprenyl diphosphate + H(+). It functions in the pathway cell wall biogenesis; peptidoglycan biosynthesis. In terms of biological role, peptidoglycan polymerase that catalyzes glycan chain elongation from lipid-linked precursors. In Mannheimia succiniciproducens (strain KCTC 0769BP / MBEL55E), this protein is Biosynthetic peptidoglycan transglycosylase.